A 603-amino-acid polypeptide reads, in one-letter code: Arginine--tRNA ligase (603 aa).

Positions 143–153 (PNIAKEMHVGH) match the 'HIGH' region motif.

Belongs to the class-I aminoacyl-tRNA synthetase family. In terms of assembly, monomer.

The protein localises to the cytoplasm. The catalysed reaction is tRNA(Arg) + L-arginine + ATP = L-arginyl-tRNA(Arg) + AMP + diphosphate. The sequence is that of Arginine--tRNA ligase from Prochlorococcus marinus (strain MIT 9211).